A 525-amino-acid polypeptide reads, in one-letter code: Protein BSP1 (525 aa).

Disordered stretches follow at residues 21–40 (INKP…TPIE), 98–262 (QQQH…PSKM), 285–325 (LSSE…VPPK), and 339–525 (DKTG…PTKI). Positions 110-122 (IEPVRHIIPDRHS) are enriched in basic and acidic residues. A compositionally biased stretch (polar residues) spans 148 to 162 (NRASSENVVKSTTSA). Composition is skewed to basic and acidic residues over residues 171-182 (YKDDITAKKLDV), 201-223 (DKNK…EDNK), and 230-242 (KDQD…KPTR). Residues 251-261 (QLKSPPQSPSK) are compositionally biased toward polar residues. Over residues 285–297 (LSSEENSRSSLSE) the composition is skewed to low complexity. Basic and acidic residues-rich tracts occupy residues 314 to 325 (KAEKKKPVVPPK) and 339 to 354 (DKTG…EPEF). Positions 382 to 398 (QNLSKNTENKKSVAQSK) are enriched in polar residues. A compositionally biased stretch (acidic residues) spans 447–456 (EESEISDSEP). Basic residues predominate over residues 510–525 (NKSRSRGPKRKLPTKI).

It is found in the cell membrane. Its subcellular location is the cytoplasm. The protein resides in the cytoskeleton. The protein localises to the actin patch. Cortical patch protein involved in endocytosis. This is Protein BSP1 (BSP1) from Candida glabrata (strain ATCC 2001 / BCRC 20586 / JCM 3761 / NBRC 0622 / NRRL Y-65 / CBS 138) (Yeast).